Here is a 383-residue protein sequence, read N- to C-terminus: ATP phosphoribosyltransferase regulatory subunit (383 aa).

This sequence belongs to the class-II aminoacyl-tRNA synthetase family. HisZ subfamily. In terms of assembly, heteromultimer composed of HisG and HisZ subunits.

It localises to the cytoplasm. Its pathway is amino-acid biosynthesis; L-histidine biosynthesis; L-histidine from 5-phospho-alpha-D-ribose 1-diphosphate: step 1/9. In terms of biological role, required for the first step of histidine biosynthesis. May allow the feedback regulation of ATP phosphoribosyltransferase activity by histidine. The chain is ATP phosphoribosyltransferase regulatory subunit from Paraburkholderia phymatum (strain DSM 17167 / CIP 108236 / LMG 21445 / STM815) (Burkholderia phymatum).